The primary structure comprises 432 residues: Enolase (432 aa).

Residue glutamine 163 participates in (2R)-2-phosphoglycerate binding. The active-site Proton donor is glutamate 205. Mg(2+) is bound by residues aspartate 242, glutamate 287, and aspartate 314. The (2R)-2-phosphoglycerate site is built by lysine 339, arginine 368, serine 369, and lysine 390. The active-site Proton acceptor is lysine 339.

This sequence belongs to the enolase family. Mg(2+) is required as a cofactor.

The protein localises to the cytoplasm. The protein resides in the secreted. Its subcellular location is the cell surface. The catalysed reaction is (2R)-2-phosphoglycerate = phosphoenolpyruvate + H2O. It participates in carbohydrate degradation; glycolysis; pyruvate from D-glyceraldehyde 3-phosphate: step 4/5. Functionally, catalyzes the reversible conversion of 2-phosphoglycerate (2-PG) into phosphoenolpyruvate (PEP). It is essential for the degradation of carbohydrates via glycolysis. This Myxococcus xanthus (strain DK1622) protein is Enolase.